Here is a 560-residue protein sequence, read N- to C-terminus: 2-hydroxyacyl-CoA lyase (560 aa).

Glu49 contacts thiamine diphosphate. 2 residues coordinate Mg(2+): Asp446 and Asn473. The Peroxisomal target signal 1 (PTS1) signature appears at Pro558 to Leu560.

This sequence belongs to the TPP enzyme family. Mg(2+) is required as a cofactor. It depends on thiamine diphosphate as a cofactor.

It is found in the cytoplasm. The protein localises to the peroxisome matrix. The enzyme catalyses an (R)-2-hydroxy-long-chain-fatty acyl-CoA = a long-chain fatty aldehyde + formyl-CoA. It catalyses the reaction a 2-hydroxy-3-methyl fatty acyl-CoA = a 2-methyl-branched fatty aldehyde + formyl-CoA. In terms of biological role, catalyzes a carbon-carbon cleavage reaction; cleaves a 2-hydroxy-3-methylacyl-CoA into formyl-CoA and a 2-methyl-branched fatty aldehyde. This is 2-hydroxyacyl-CoA lyase from Saccharomyces cerevisiae (strain ATCC 204508 / S288c) (Baker's yeast).